The sequence spans 413 residues: Serine hydroxymethyltransferase (413 aa).

Residues leucine 119 and 123–125 (GHL) each bind (6S)-5,6,7,8-tetrahydrofolate. Lysine 228 is subject to N6-(pyridoxal phosphate)lysine. Residue 351–353 (SPF) coordinates (6S)-5,6,7,8-tetrahydrofolate.

It belongs to the SHMT family. In terms of assembly, homodimer. Pyridoxal 5'-phosphate is required as a cofactor.

The protein resides in the cytoplasm. It carries out the reaction (6R)-5,10-methylene-5,6,7,8-tetrahydrofolate + glycine + H2O = (6S)-5,6,7,8-tetrahydrofolate + L-serine. It functions in the pathway one-carbon metabolism; tetrahydrofolate interconversion. It participates in amino-acid biosynthesis; glycine biosynthesis; glycine from L-serine: step 1/1. Its function is as follows. Catalyzes the reversible interconversion of serine and glycine with tetrahydrofolate (THF) serving as the one-carbon carrier. This reaction serves as the major source of one-carbon groups required for the biosynthesis of purines, thymidylate, methionine, and other important biomolecules. Also exhibits THF-independent aldolase activity toward beta-hydroxyamino acids, producing glycine and aldehydes, via a retro-aldol mechanism. The polypeptide is Serine hydroxymethyltransferase (Clostridium botulinum (strain Langeland / NCTC 10281 / Type F)).